The chain runs to 557 residues: Probable serine/threonine-protein kinase WNK7 (557 aa).

Positions 28-285 constitute a Protein kinase domain; the sequence is IRYKEVIGKG…AEELLLDSFL (258 aa). ATP is bound by residues 108 to 111 and Lys158; that span reads TELF. Asp175 acts as the Proton acceptor in catalysis. Positions 451 to 477 are enriched in polar residues; the sequence is QNQSSKDNHQNGASSQAGESISHSLSS. A disordered region spans residues 451-517; the sequence is QNQSSKDNHQ…EEEEDERLKE (67 aa). The residue at position 505 (Ser505) is a Phosphoserine.

It belongs to the protein kinase superfamily. Ser/Thr protein kinase family. WNK subfamily.

It catalyses the reaction L-seryl-[protein] + ATP = O-phospho-L-seryl-[protein] + ADP + H(+). The enzyme catalyses L-threonyl-[protein] + ATP = O-phospho-L-threonyl-[protein] + ADP + H(+). Its function is as follows. May regulate flowering time by modulating the photoperiod pathway. In Arabidopsis thaliana (Mouse-ear cress), this protein is Probable serine/threonine-protein kinase WNK7 (WNK7).